The following is a 202-amino-acid chain: Translation initiation factor IF-3 (202 aa).

The tract at residues 178–202 is disordered; it reads TPRKTPLLKKESETTEPKKALRSIN. Residues 185-196 show a composition bias toward basic and acidic residues; it reads LKKESETTEPKK.

The protein belongs to the IF-3 family. Monomer.

Its subcellular location is the cytoplasm. Functionally, IF-3 binds to the 30S ribosomal subunit and shifts the equilibrium between 70S ribosomes and their 50S and 30S subunits in favor of the free subunits, thus enhancing the availability of 30S subunits on which protein synthesis initiation begins. In Prochlorococcus marinus (strain NATL1A), this protein is Translation initiation factor IF-3.